A 1078-amino-acid polypeptide reads, in one-letter code: Teashirt homolog 1-A (1078 aa).

3 disordered regions span residues 1 to 110 (MPRR…NVSY), 140 to 197 (KSNE…SNSA), and 271 to 300 (GHYRDDNKDRDAERTKRWSKPRKRSLMEME). Positions 26–36 (IEEDNLEDDGL) are enriched in acidic residues. A compositionally biased stretch (polar residues) spans 57–71 (PSYQNSPISSATNQD). Low complexity predominate over residues 143–197 (ENSSPTTNTNKSSMSEATGSTSDPDTPTTIPSSSCTNTSTSISVTTSNSTNSNSA). C2H2-type zinc fingers lie at residues 248-272 (FKCKDCSAAYDTLVELTVHMNETGH) and 309-333 (LKCMYCGHSFESLQDLSVHMIKTKH). The span at 271–286 (GHYRDDNKDRDAERTK) shows a compositional bias: basic and acidic residues. The segment at 365 to 394 (DSPEQAGISPGASVSESAKDPKAANPYVTP) is disordered. Residues 418–442 (LKCMECGSSHDSLQQLTAHMMVTGH) form a C2H2-type 3 zinc finger. Disordered regions lie at residues 472 to 524 (LPPT…ENED) and 850 to 877 (RLTPKSSTPSTVSEKSDADGSSFEEAMD). Residues 497 to 524 (HSEEKKDPEKEKVNNCEVEKRIKEENED) are compositionally biased toward basic and acidic residues. Over residues 853 to 862 (PKSSTPSTVS) the composition is skewed to polar residues. Residues 885–955 (RKGRQSNWNP…NVKYQLRRTG (71 aa)) constitute a DNA-binding region (homeobox). 2 consecutive C2H2-type zinc fingers follow at residues 970–992 (FFCNDCASQFRTASTYIGHLETH) and 1038–1061 (FQCKLCNRTFASKHAVKLHLSKTH).

This sequence belongs to the teashirt C2H2-type zinc-finger protein family.

The protein resides in the nucleus. In terms of biological role, probable transcriptional regulator involved in developmental processes. May act as a transcriptional repressor (Potential). Involved in two major neuronal regionalization processes: primary anteroposterior (AP) axis patterning of the CNS and segmentation of the cranial neuronal crest (CNS) development. In Xenopus laevis (African clawed frog), this protein is Teashirt homolog 1-A (tshz1-a).